The sequence spans 507 residues: uncharacterized protein (507 aa).

Disordered regions lie at residues 91-162 (NEKT…KKLL), 174-255 (EKLQ…QQQQ), and 309-422 (KRKL…NYST). Over residues 116 to 143 (DSSESDSSESESDSSESESESESNETSE) the composition is skewed to acidic residues. A compositionally biased stretch (low complexity) spans 144–155 (NESSSSSEPESS). A compositionally biased stretch (basic and acidic residues) spans 174 to 193 (EKLQQEQQKQKEAQKPKEKP). Composition is skewed to low complexity over residues 194 to 236 (QQQQ…QQIE), 243 to 255 (PQQQQQQQQQQQQ), and 313 to 350 (QSQLDNDGLANKNDNNSNNNNYNNSNNNDSNNNNTNKP). The segment covering 351–360 (LSKRQKKLLK) has biased composition (basic residues). Residues 378 to 409 (NNKNDNSTNDSNNNNDNNNNNKNDTNDSNNDD) show a composition bias toward low complexity.

This is an uncharacterized protein from Dictyostelium discoideum (Social amoeba).